The primary structure comprises 1295 residues: MEIYRGAPALSAFKTTKQLEQLKQAGIPVKELYAEYQHFVDLHNELSDEHRSVLVQLLKYGPEMPAHEPQGALVLVTPRIGTISPWASKATDIAHNCGLKSIHRVERGVAFYLQGDLSAEELKQAALLLHDRMTESVLYDMNDAQQLFRSQEPQPLSSVDILAGGREALAQANISLGLALADDEIDYLVENFRKLDRNPNDIELYMFAQANSEHCRHKIFNADWTIDGAEQPKSLFKMIKNTFETTPDYVLSAYKDNAAVMEGHEAGRFYPQPDSMSYGYSHEPVHILMKVETHNHPTAISPYPGAATGSGGEIRDEGATGVGSKPKAGLVGFSVSNLNIPGFKQPWEENYGKPARIVSALDIMLEGPLGGAAFNNEFGRPALTGYFRTYEQTVDSHNGRETRGYHKPIMIAGGLGNIREAHVQKGDIPVGAKLVVLGGPAMNIGLGGGAASSMASGESTEDLDFASVQRENPEMERRCQEVIDRCWQLGADNPIAFIHDVGAGGLSNAMPELVSDGGRGGRFELREIPNDEPGMTPLEIWCNESQERYVIAIAPENLARFEALCERERAEYAVIGEATEELTILLNDAKFSNQPIDLSLDVLLGKPPKMHRDVARLQTEGTPLHLEAADLNDAADRLLRLPAIAEKTFLITIGDRSVTGLVARDQMVGPWQIPVADVAVTASSYDSYHGEAMAMGERTPLALLNFGASARMAVAESLTNIAAADIGDLKRIKLSANWMCAAGHPGEDAGLYEAVKAVGEELCPELGITIPVGKDSMSMKTQWQQDGEDKAVTAPMSLVITAFGRVNDIRSTLTPQLRTDKGQSHLVLIDLGKGQNRLGGSALAQVYQQLGQHTPDLDDTETFKAFFNTTQQLVTEGRLLAYHDRSDGGLFTTVAEMAFAGNCGAKVALDELGEDNLATLFNEELGAVIQVSDEQYQKVMDAYKTAGLGDCVKRIGEPTHEDAIVFTRDEQNVLAQSRTHWRTVWAETTHHMQRLRDNPVCADEEFRLKQRADNPGLLADLTFDPSEDIAAPYIAKGVAPKVAILREQGVNSHYEMAAAFDRAGFEAVDVHMSDILAGRVSLEDMQALAACGGFSYGDVLGAGEGWAKSILFNDRAREQFEAFFKRNDTLALGVCNGCQMLSTLKQLIPGTEHWPRFVTNRSERFEARFSLVEVQESKSIFLGDMAGSRMPIAVSHGEGRAEFANPQQQSQLEQNSQVALRYIDNWGEVAEQYPANPNGSPKGITAVTSDDGRVTAMMPHPERVFRTVANSWHPDEWGEDSPWMRMFRNARKHLG.

Residues 305-316 (GAATGSGGEIRD), 384-386 (TGY), and Ala-676 contribute to the ATP site. Positions 677, 716, 720, and 884 each coordinate Mg(2+). Ser-886 contacts ATP. In terms of domain architecture, Glutamine amidotransferase type-1 spans 1042 to 1295 (VAILREQGVN…MFRNARKHLG (254 aa)). Cys-1135 functions as the Nucleophile in the catalytic mechanism. Active-site residues include His-1260 and Glu-1262.

In the N-terminal section; belongs to the FGAMS family. As to quaternary structure, monomer.

It localises to the cytoplasm. It catalyses the reaction N(2)-formyl-N(1)-(5-phospho-beta-D-ribosyl)glycinamide + L-glutamine + ATP + H2O = 2-formamido-N(1)-(5-O-phospho-beta-D-ribosyl)acetamidine + L-glutamate + ADP + phosphate + H(+). It participates in purine metabolism; IMP biosynthesis via de novo pathway; 5-amino-1-(5-phospho-D-ribosyl)imidazole from N(2)-formyl-N(1)-(5-phospho-D-ribosyl)glycinamide: step 1/2. Functionally, phosphoribosylformylglycinamidine synthase involved in the purines biosynthetic pathway. Catalyzes the ATP-dependent conversion of formylglycinamide ribonucleotide (FGAR) and glutamine to yield formylglycinamidine ribonucleotide (FGAM) and glutamate. This chain is Phosphoribosylformylglycinamidine synthase, found in Idiomarina loihiensis (strain ATCC BAA-735 / DSM 15497 / L2-TR).